Reading from the N-terminus, the 369-residue chain is GTPase Obg (369 aa).

In terms of domain architecture, Obg spans 1–159 (MKFIDEAKIE…RELRLELKVL (159 aa)). The disordered stretch occupies residues 128–148 (IHFKSSTNRAPRQKSEGKEGE). The OBG-type G domain maps to 160–333 (ADIGLLGMPN…LVTEIYDYIA (174 aa)). Residues 166-173 (GMPNAGKS), 191-195 (FTTLH), 213-216 (DIPG), 283-286 (NKLD), and 314-316 (SAL) each bind GTP. Mg(2+)-binding residues include serine 173 and threonine 193.

It belongs to the TRAFAC class OBG-HflX-like GTPase superfamily. OBG GTPase family. Monomer. Mg(2+) is required as a cofactor.

It localises to the cytoplasm. An essential GTPase which binds GTP, GDP and possibly (p)ppGpp with moderate affinity, with high nucleotide exchange rates and a fairly low GTP hydrolysis rate. Plays a role in control of the cell cycle, stress response, ribosome biogenesis and in those bacteria that undergo differentiation, in morphogenesis control. This chain is GTPase Obg, found in Herminiimonas arsenicoxydans.